A 335-amino-acid polypeptide reads, in one-letter code: Acetyl-coenzyme A carboxylase carboxyl transferase subunit alpha (335 aa).

The region spanning 48–308 (VLESKVDALR…KSLLVEELRM (261 aa)) is the CoA carboxyltransferase C-terminal domain.

It belongs to the AccA family. As to quaternary structure, acetyl-CoA carboxylase is a heterohexamer composed of biotin carboxyl carrier protein (AccB), biotin carboxylase (AccC) and two subunits each of ACCase subunit alpha (AccA) and ACCase subunit beta (AccD).

The protein resides in the cytoplasm. It carries out the reaction N(6)-carboxybiotinyl-L-lysyl-[protein] + acetyl-CoA = N(6)-biotinyl-L-lysyl-[protein] + malonyl-CoA. It participates in lipid metabolism; malonyl-CoA biosynthesis; malonyl-CoA from acetyl-CoA: step 1/1. Functionally, component of the acetyl coenzyme A carboxylase (ACC) complex. First, biotin carboxylase catalyzes the carboxylation of biotin on its carrier protein (BCCP) and then the CO(2) group is transferred by the carboxyltransferase to acetyl-CoA to form malonyl-CoA. The polypeptide is Acetyl-coenzyme A carboxylase carboxyl transferase subunit alpha (Chlorobium phaeobacteroides (strain BS1)).